The chain runs to 213 residues: MPILVIVRHGQSEWNLKNLFTGWSDVELTPTGEHEAEYAGIVLRPYHFDIAFTSVLKRAIHTLSIILNQTGATIPIIENEALNERNYGDLQGLNKAEVGEKYGAQQLIAWRRSYTEVPPGGESLENTCQRVIPYYQEKIEPELKDGRNVLIVAHGNSLRALMMHLEKISPEDIAHVDLATGAPRLYEFSSKLDLNSVSYIKLPETPLDVSTLL.

Substrate contacts are provided by residues 8–15 (RHGQSEWN), 21–22 (TG), arginine 58, 84–87 (ERNY), lysine 95, 111–112 (RR), and 155–156 (GN). Residue histidine 9 is the Tele-phosphohistidine intermediate of the active site. Residue glutamate 84 is the Proton donor/acceptor of the active site.

It belongs to the phosphoglycerate mutase family. BPG-dependent PGAM subfamily.

It catalyses the reaction (2R)-2-phosphoglycerate = (2R)-3-phosphoglycerate. Its pathway is carbohydrate degradation; glycolysis; pyruvate from D-glyceraldehyde 3-phosphate: step 3/5. Catalyzes the interconversion of 2-phosphoglycerate and 3-phosphoglycerate. The chain is 2,3-bisphosphoglycerate-dependent phosphoglycerate mutase from Cytophaga hutchinsonii (strain ATCC 33406 / DSM 1761 / CIP 103989 / NBRC 15051 / NCIMB 9469 / D465).